The sequence spans 164 residues: Protein-export protein SecB (164 aa).

It belongs to the SecB family. In terms of assembly, homotetramer, a dimer of dimers. One homotetramer interacts with 1 SecA dimer.

Its subcellular location is the cytoplasm. Functionally, one of the proteins required for the normal export of preproteins out of the cell cytoplasm. It is a molecular chaperone that binds to a subset of precursor proteins, maintaining them in a translocation-competent state. It also specifically binds to its receptor SecA. The sequence is that of Protein-export protein SecB from Janthinobacterium sp. (strain Marseille) (Minibacterium massiliensis).